The following is a 301-amino-acid chain: tRNA dimethylallyltransferase 1 (301 aa).

11 to 18 (GPTGVGKT) lines the ATP pocket. 13-18 (TGVGKT) contributes to the substrate binding site. The tract at residues 36 to 39 (DSRQ) is interaction with substrate tRNA.

This sequence belongs to the IPP transferase family. In terms of assembly, monomer. Mg(2+) is required as a cofactor.

It catalyses the reaction adenosine(37) in tRNA + dimethylallyl diphosphate = N(6)-dimethylallyladenosine(37) in tRNA + diphosphate. Functionally, catalyzes the transfer of a dimethylallyl group onto the adenine at position 37 in tRNAs that read codons beginning with uridine, leading to the formation of N6-(dimethylallyl)adenosine (i(6)A). The polypeptide is tRNA dimethylallyltransferase 1 (Bacteroides fragilis (strain YCH46)).